Here is a 1159-residue protein sequence, read N- to C-terminus: DNA-directed RNA polymerase subunit beta' (1159 aa).

Positions 398, 400, and 402 each coordinate Mg(2+). Residues Cys741, Cys815, Cys822, and Cys825 each contribute to the Zn(2+) site.

Belongs to the RNA polymerase beta' chain family. As to quaternary structure, the RNAP catalytic core consists of 2 alpha, 1 beta, 1 beta' and 1 omega subunit. When a sigma factor is associated with the core the holoenzyme is formed, which can initiate transcription. Mg(2+) is required as a cofactor. The cofactor is Zn(2+).

It catalyses the reaction RNA(n) + a ribonucleoside 5'-triphosphate = RNA(n+1) + diphosphate. DNA-dependent RNA polymerase catalyzes the transcription of DNA into RNA using the four ribonucleoside triphosphates as substrates. This is DNA-directed RNA polymerase subunit beta' from Porphyromonas cangingivalis.